Consider the following 101-residue polypeptide: MTSPVAVIARFMPRPDARSALRALLDAMITPTRAEDGCRSYDLYESADGGELVLFERYRSRIALDEHRGSPHYLNYRAQVGELLTRPVAVTVLAPLDEASA.

An ABM domain is found at 5-93 (VAVIARFMPR…LTRPVAVTVL (89 aa)).

In terms of assembly, homodimer.

Its function is as follows. Putative monooygenase that might be involved in antibiotic biosynthesis, or may act as reactive oxygen species scavenger that could help in evading host defenses. The protein is Putative monooxygenase Rv0793 of Mycobacterium tuberculosis (strain ATCC 25618 / H37Rv).